The chain runs to 181 residues: Adenylate kinase (181 aa).

10–15 serves as a coordination point for ATP; that stretch reads GAGKGT. Residues 30-59 form an NMP region; sequence STGDLFRANISQGTELGKQAQEYMDAGKLV. Residues T31, R36, 57-59, 85-88, and Q92 each bind AMP; these read KLV and GFPR. The interval 126–132 is LID; the sequence is SRGRNDD. Residue R127 participates in ATP binding. The AMP site is built by R129 and R140. G166 is a binding site for ATP.

Belongs to the adenylate kinase family. In terms of assembly, monomer.

It localises to the cytoplasm. It catalyses the reaction AMP + ATP = 2 ADP. It participates in purine metabolism; AMP biosynthesis via salvage pathway; AMP from ADP: step 1/1. Functionally, catalyzes the reversible transfer of the terminal phosphate group between ATP and AMP. Plays an important role in cellular energy homeostasis and in adenine nucleotide metabolism. This chain is Adenylate kinase, found in Corynebacterium urealyticum (strain ATCC 43042 / DSM 7109).